Consider the following 450-residue polypeptide: UDP-N-acetylmuramate--L-alanine ligase (450 aa).

ATP is bound at residue G112–T118.

This sequence belongs to the MurCDEF family.

It localises to the cytoplasm. The enzyme catalyses UDP-N-acetyl-alpha-D-muramate + L-alanine + ATP = UDP-N-acetyl-alpha-D-muramoyl-L-alanine + ADP + phosphate + H(+). It functions in the pathway cell wall biogenesis; peptidoglycan biosynthesis. In terms of biological role, cell wall formation. This chain is UDP-N-acetylmuramate--L-alanine ligase, found in Endomicrobium trichonymphae.